The primary structure comprises 240 residues: Putative peptidoglycan hydrolase Rv2525c (240 aa).

A signal peptide (tat-type signal) is located at residues 1–33; sequence MSVSRRDVLKFAAATPGVLGLGVVASSLRAAPA.

Post-translationally, predicted to be exported by the Tat system. The position of the signal peptide cleavage has not been experimentally proven.

It localises to the secreted. The enzyme catalyses Hydrolysis of (1-&gt;4)-beta-linkages between N-acetylmuramic acid and N-acetyl-D-glucosamine residues in a peptidoglycan and between N-acetyl-D-glucosamine residues in chitodextrins.. The protein operates within cell wall degradation; peptidoglycan degradation. May function as a peptidoglycan hydrolase with glycosidase activity. In vitro, displays esterase activity toward p-nitrophenyl esters of various acyl chain length (C4 to C16), with a preference for p-nitrophenyl butyrate (C4). The chain is Putative peptidoglycan hydrolase Rv2525c from Mycobacterium tuberculosis (strain ATCC 25618 / H37Rv).